We begin with the raw amino-acid sequence, 422 residues long: Phosphoribosylamine--glycine ligase (422 aa).

The ATP-grasp domain maps to 107 to 313 (KDLMKKYDIP…LVQVLLDLLD (207 aa)). 133–194 (VQEKGAPIVI…EEYLSGEEFS (62 aa)) contacts ATP. 2 residues coordinate Mg(2+): glutamate 283 and asparagine 285.

It belongs to the GARS family. Mg(2+) is required as a cofactor. Mn(2+) serves as cofactor.

The enzyme catalyses 5-phospho-beta-D-ribosylamine + glycine + ATP = N(1)-(5-phospho-beta-D-ribosyl)glycinamide + ADP + phosphate + H(+). It participates in purine metabolism; IMP biosynthesis via de novo pathway; N(1)-(5-phospho-D-ribosyl)glycinamide from 5-phospho-alpha-D-ribose 1-diphosphate: step 2/2. The chain is Phosphoribosylamine--glycine ligase from Bacillus subtilis (strain 168).